The chain runs to 972 residues: 116 kDa U5 small nuclear ribonucleoprotein component (972 aa).

Position 1 is an N-acetylmethionine (Met1). Residues 1–54 (MDTDLYDEFGNYIGPELDSDEDDDELGRETKDLDEMDDDDDDDDVGDHDDDHPG) form a disordered region. 2 stretches are compositionally biased toward acidic residues: residues 17-26 (LDSDEDDDEL) and 34-48 (DEMDDDDDDDDVGDH). Ser19 bears the Phosphoserine mark. Lys64 participates in a covalent cross-link: Glycyl lysine isopeptide (Lys-Gly) (interchain with G-Cter in SUMO1); alternate. Lys64 participates in a covalent cross-link: Glycyl lysine isopeptide (Lys-Gly) (interchain with G-Cter in SUMO2); alternate. Phosphothreonine is present on Thr86. Residues 127–409 (ELIRNVTLCG…GIHLTKEELK (283 aa)) enclose the tr-type G domain. GTP-binding positions include 136–143 (GHLHHGKT), 204–208 (DTPGH), and 258–261 (NKID).

This sequence belongs to the TRAFAC class translation factor GTPase superfamily. Classic translation factor GTPase family. EF-G/EF-2 subfamily. Component of the U5 snRNP and the U4/U6-U5 tri-snRNP complex, a building block of the spliceosome. The U4/U6-U5 tri-snRNP complex is composed of the U4, U6 and U5 snRNAs and at least PRPF3, PRPF4, PRPF6, PRPF8, PRPF31, SNRNP200, TXNL4A, SNRNP40, DDX23, CD2BP2, PPIH, SNU13, EFTUD2, SART1 and USP39. Component of the pre-catalytic, catalytic and post-catalytic spliceosome complexes. Component of the minor spliceosome, which splices U12-type introns. Within this complex, interacts with CRIPT. Interacts with ERBB4 and PRPF8. Interacts with PIH1D1. Interacts with RPAP3 and URI1 in a ZNHIT2-dependent manner. Interacts with NRDE2. Interacts with FAM50A. Interacts with UBL5.

Its subcellular location is the nucleus. Its function is as follows. Required for pre-mRNA splicing as component of the spliceosome, including pre-catalytic, catalytic and post-catalytic spliceosomal complexes. Component of the U5 snRNP and the U4/U6-U5 tri-snRNP complex, a building block of the spliceosome. As a component of the minor spliceosome, involved in the splicing of U12-type introns in pre-mRNAs. In Homo sapiens (Human), this protein is 116 kDa U5 small nuclear ribonucleoprotein component (EFTUD2).